Reading from the N-terminus, the 156-residue chain is Small ribosomal subunit protein uS7 (156 aa).

Belongs to the universal ribosomal protein uS7 family. Part of the 30S ribosomal subunit. Contacts proteins S9 and S11.

One of the primary rRNA binding proteins, it binds directly to 16S rRNA where it nucleates assembly of the head domain of the 30S subunit. Is located at the subunit interface close to the decoding center, probably blocks exit of the E-site tRNA. The polypeptide is Small ribosomal subunit protein uS7 (Rhodospirillum centenum (strain ATCC 51521 / SW)).